The chain runs to 858 residues: Heat shock protein 105 kDa (858 aa).

Residue Ser2 is modified to N-acetylserine. At Lys471 the chain carries N6-acetyllysine. 2 disordered regions span residues 500–584 (KVPT…PPEA) and 796–858 (CEPV…MDLD). Positions 504 to 514 (EENEMSSEADM) are enriched in acidic residues. Ser509 and Ser510 each carry phosphoserine. Polar residues predominate over residues 532 to 554 (QQDNSEAGTQPQVQTDAQQTSQS). A Phosphoserine modification is found at Ser557. At Thr561 the chain carries Phosphothreonine. Composition is skewed to basic and acidic residues over residues 563 to 584 (EENKIPDADKANEKKVDQPPEA) and 805 to 814 (PKIESPKLER). Phosphoserine is present on Ser809. At Thr815 the chain carries Phosphothreonine. Residues 821–832 (IDKKEEDLEDKN) are compositionally biased toward basic and acidic residues. Residues 849-858 (EKNSVNMDLD) show a composition bias toward polar residues.

The protein belongs to the heat shock protein 70 family. In terms of assembly, interacts with HSPA8/HSC70. Interacts with HSPA1A (via NBD) and HSPA1B (via NBD). In terms of processing, phosphorylation on Ser-509 may be important for regulation of the HSPA8/HSC70 chaperone activity.

Its subcellular location is the cytoplasm. Functionally, acts as a nucleotide-exchange factor (NEF) for chaperone proteins HSPA1A and HSPA1B, promoting the release of ADP from HSPA1A/B thereby triggering substrate release. Prevents the aggregation of denatured proteins in cells under severe stress, on which the ATP levels decrease markedly. Inhibits HSPA8/HSC70 ATPase and chaperone activities. In Pongo abelii (Sumatran orangutan), this protein is Heat shock protein 105 kDa (HSPH1).